Consider the following 329-residue polypeptide: Minor capsid protein A1 (329 aa).

Positions 143–162 (GPSPVPGPNPDPPLEPPPGT) are disordered. Positions 145–161 (SPVPGPNPDPPLEPPPG) are enriched in pro residues.

The protein resides in the virion. Minor capsid protein. The protein is Minor capsid protein A1 of Qbeta virus (strain MX1).